Reading from the N-terminus, the 977-residue chain is Ephrin type-A receptor 2 (977 aa).

A signal peptide spans 1-25 (MELRAVGFCLALLWGCALAAAAAQG). Residues 1 to 205 (MELRAVGFCL…YYKKCPEMLQ (205 aa)) are mediates interaction with CLDN4. Over 26 to 538 (KEVVLLDFAA…STEGSANMAV (513 aa)) the chain is Extracellular. The Eph LBD domain maps to 27 to 205 (EVVLLDFAAM…YYKKCPEMLQ (179 aa)). 2 disulfide bridges follow: C69–C187 and C104–C114. Residues 329 to 433 (PPSAPNYLTA…TSRSFRTASV (105 aa)) form the Fibronectin type-III 1 domain. N408 and N436 each carry an N-linked (GlcNAc...) asparagine glycan. The 92-residue stretch at 439-530 (EPPKVRLEDR…KVHEFQTLST (92 aa)) folds into the Fibronectin type-III 2 domain. The helical transmembrane segment at 539 to 559 (IGGVAVGVVLLLVLAGVGLFI) threads the bilayer. Residues 560–977 (HRRRRNLRAR…DQVNTVGIPI (418 aa)) are Cytoplasmic-facing. Phosphoserine is present on residues S571 and S580. 2 positions are modified to phosphotyrosine; by autocatalysis: Y589 and Y595. Positions 607 to 907 (TEIHPSCVAR…STSGSEGVPF (301 aa)) are mediates interaction with ARHGEF16. Positions 614-876 (VARQKVIGAG…DIVSILDKLI (263 aa)) constitute a Protein kinase domain. 620-628 (IGAGEFGEV) provides a ligand contact to ATP. The residue at position 629 (Y629) is a Phosphotyrosine. K647 contributes to the ATP binding site. At T648 the chain carries Phosphothreonine. Phosphotyrosine; by autocatalysis is present on Y736. D740 serves as the catalytic Proton acceptor. Y773 carries the post-translational modification Phosphotyrosine; by autocatalysis. Residues S870, S893, S898, and S902 each carry the phosphoserine modification. Residues 887 to 977 (DFDPRVSIRL…DQVNTVGIPI (91 aa)) are negatively regulates interaction with ARHGEF16. Residues 905–969 (VPFRTVSEWL…AYSLLGLKDQ (65 aa)) enclose the SAM domain. Y922 bears the Phosphotyrosine; by autocatalysis mark. A Phosphotyrosine modification is found at Y931. Positions 975 to 977 (IPI) match the PDZ-binding motif.

Belongs to the protein kinase superfamily. Tyr protein kinase family. Ephrin receptor subfamily. As to quaternary structure, homodimer. Interacts with INPPL1; regulates activated EPHA2 endocytosis and degradation. Interacts (inactivated form) with PTK2/FAK1 and interacts (EFNA1 ligand-activated form) with PTPN11; regulates integrin-mediated adhesion. Interacts with ARHGEF16, DOCK4 and ELMO2; mediates ligand-independent activation of RAC1 which stimulates cell migration. Interacts with CLDN4; phosphorylates CLDN4 and may regulate tight junctions. Interacts with ACP1. Interacts with CEMIP. Interacts with NCK1; may regulate EPHA2 activity in cell migration and adhesion. Interacts with SLA. Interacts (phosphorylated form) with VAV2, VAV3 and PI3-kinase p85 subunit (PIK3R1, PIK3R2 or PIK3R3); critical for the EFNA1-induced activation of RAC1 which stimulates cell migration. Interacts with ANKS1A. Interacts with TIMD4. Post-translationally, autophosphorylates. Phosphorylated at Ser-898 by PKB; serum-induced phosphorylation which targets EPHA2 to the cell leading edge and stimulates cell migration. Phosphorylation by PKB is inhibited by EFNA1-activated EPHA2 which regulates PKB activity via a reciprocal regulatory loop. Phosphorylated on tyrosine upon binding and activation by EFNA1. Phosphorylated residues Tyr-589 and Tyr-595 are required for binding VAV2 and VAV3 while phosphorylated residues Tyr-736 and Tyr-931 are required for binding PI3-kinase p85 subunit (PIK3R1, PIK3R2 or PIK3R3). These phosphorylated residues are critical for recruitment of VAV2 and VAV3 and PI3-kinase p85 subunit which transduce downstream signaling to activate RAC1 GTPase and cell migration. Dephosphorylation of Tyr-931 by PTPRF prevents the interaction of EPHA2 with NCK1. Phosphorylated at Ser-898 in response to TNF by RPS6KA1 and RPS6KA3; RPS6KA-EPHA2 signaling pathway controls cell migration. Phosphorylated at Ser-898 by PKA; blocks cell retraction induced by EPHA2 kinase activity. Dephosphorylated by ACP1. Ubiquitinated by CHIP/STUB1. Ubiquitination is regulated by the HSP90 chaperone and regulates the receptor stability and activity through proteasomal degradation. ANKS1A prevents ubiquitination and degradation. As to expression, expressed in the lung, intestine and liver. Expressed in myogenic progenitor cells.

The protein localises to the cell membrane. The protein resides in the cell projection. It is found in the ruffle membrane. It localises to the lamellipodium membrane. Its subcellular location is the cell junction. The protein localises to the focal adhesion. The enzyme catalyses L-tyrosyl-[protein] + ATP = O-phospho-L-tyrosyl-[protein] + ADP + H(+). Functionally, receptor tyrosine kinase which binds promiscuously membrane-bound ephrin-A family ligands residing on adjacent cells, leading to contact-dependent bidirectional signaling into neighboring cells. The signaling pathway downstream of the receptor is referred to as forward signaling while the signaling pathway downstream of the ephrin ligand is referred to as reverse signaling. Activated by the ligand ephrin-A1/EFNA1 regulates migration, integrin-mediated adhesion, proliferation and differentiation of cells. Regulates cell adhesion and differentiation through DSG1/desmoglein-1 and inhibition of the ERK1/ERK2 signaling pathway. May also participate in UV radiation-induced apoptosis and have a ligand-independent stimulatory effect on chemotactic cell migration. During development, may function in distinctive aspects of pattern formation and subsequently in development of several fetal tissues. Involved for instance in angiogenesis, in early hindbrain development and epithelial proliferation and branching morphogenesis during mammary gland development. Engaged by the ligand ephrin-A5/EFNA5 may regulate lens fiber cells shape and interactions and be important for lens transparency development and maintenance. With ephrin-A2/EFNA2 may play a role in bone remodeling through regulation of osteoclastogenesis and osteoblastogenesis. The protein is Ephrin type-A receptor 2 (Epha2) of Mus musculus (Mouse).